A 796-amino-acid chain; its full sequence is DNA damage-responsive transcriptional repressor RPH1 (796 aa).

The 42-residue stretch at 14–55 folds into the JmjN domain; sequence VPVFKPTYEQFEDFYAYCKAINKYGMKSGVVKVIPPKEWKDK. The 163-residue stretch at 193–355 folds into the JmjC domain; the sequence is PEGLNVWNVA…IGKKAGKCHC (163 aa). Residue Thr-399 is modified to Phosphothreonine. A phosphoserine mark is found at Ser-430, Ser-459, Ser-557, Ser-561, Ser-575, and Ser-584. Positions 455-471 match the Bipartite nuclear localization signal motif; that stretch reads KRISSFQEQPLNKLLKR. Positions 599–692 are disordered; sequence RQQHSQQHSF…DKEQGSSPLN (94 aa). The segment covering 601–621 has biased composition (polar residues); that stretch reads QHSQQHSFSTPSTVSNLSTSV. Positions 629 to 640 are enriched in basic and acidic residues; the sequence is NDIKTPHPERPN. Phosphoserine is present on Ser-652. Polar residues predominate over residues 654–669; that stretch reads VETSKSNLILSKVAST. Residues 670–686 are compositionally biased toward basic and acidic residues; that stretch reads RQEDSFTSRNDDLDKEQ. Residue Ser-689 is modified to Phosphoserine. A C2H2-type 1 zinc finger spans residues 709–732; sequence YICKECQRKFSSGHHLTRHKKSVH. The C2H2-type 2; atypical zinc-finger motif lies at 738–763; sequence HSCPKCGKRFKRRDHVLQHLNKKIPC. The disordered stretch occupies residues 774–796; that stretch reads IMNPTVQPQDGKAAINQQSTPLN.

In terms of processing, RAD53-dependent phosphorylated in response to DNA damage.

The protein localises to the nucleus. Functionally, transcriptional repressor of photolyase PHR1. Recognizes and binds the sequence AG(4) in the upstream repressing sequence of PHR1. Derepresses PHR1 transcription when phosphorylated. This is DNA damage-responsive transcriptional repressor RPH1 (RPH1) from Saccharomyces cerevisiae (strain ATCC 204508 / S288c) (Baker's yeast).